Here is a 478-residue protein sequence, read N- to C-terminus: MTLSFVTRWRDELPGTYTALSPTPLNNARLIWHNTELANTLSIPSSLFKNDAGVWGGETLLPGMSPLAQVYSGHQFGVWAGQLGDGRGILLGEQRLADGTTMDWHLKGAGLTPYSRMGDGRAVLRSTIRESLASEAMHYLGIPTTRALSIVTSDSPVYRETVEPGAMLMRVAPSHLRFGHFEHFYYRREPEKVRQLADFAIRHYWSHLEDDEDKYRLWFSDVVARTASLIAQWQTVGFAHGVMNTDNMSLLGLTLDYGPFGFLDDYEPGFICNHSDHQGRYSFDNQPAVALWNLQRLAQTLSPFVAVDALNEALDSYQQVLLTHYGQRMRQKLGFMTEQKEDNALLNELFSLMARERSDYTRTFRMLSLTEQYSAASPLRDEFIDRAAFDDWFARYRVRLQQDEVTDSERQQLMQSVNPALVLRNWLAQRAIEAAEKGDMTELHRLHEALRNPFSDRDDDYVSRPPDWGKRLEVSCSS.

ATP-binding residues include Gly84, Gly86, Arg87, Lys107, Asp119, Gly120, Arg170, and Arg177. Asp246 serves as the catalytic Proton acceptor. Asn247 and Asp256 together coordinate Mg(2+). Position 256 (Asp256) interacts with ATP.

It belongs to the SELO family. The cofactor is Mg(2+). Mn(2+) is required as a cofactor.

It catalyses the reaction L-seryl-[protein] + ATP = 3-O-(5'-adenylyl)-L-seryl-[protein] + diphosphate. The enzyme catalyses L-threonyl-[protein] + ATP = 3-O-(5'-adenylyl)-L-threonyl-[protein] + diphosphate. It carries out the reaction L-tyrosyl-[protein] + ATP = O-(5'-adenylyl)-L-tyrosyl-[protein] + diphosphate. The catalysed reaction is L-histidyl-[protein] + UTP = N(tele)-(5'-uridylyl)-L-histidyl-[protein] + diphosphate. It catalyses the reaction L-seryl-[protein] + UTP = O-(5'-uridylyl)-L-seryl-[protein] + diphosphate. The enzyme catalyses L-tyrosyl-[protein] + UTP = O-(5'-uridylyl)-L-tyrosyl-[protein] + diphosphate. In terms of biological role, nucleotidyltransferase involved in the post-translational modification of proteins. It can catalyze the addition of adenosine monophosphate (AMP) or uridine monophosphate (UMP) to a protein, resulting in modifications known as AMPylation and UMPylation. The chain is Protein nucleotidyltransferase YdiU from Escherichia coli O17:K52:H18 (strain UMN026 / ExPEC).